The sequence spans 94 residues: Co-chaperonin GroES (94 aa).

It belongs to the GroES chaperonin family. In terms of assembly, heptamer of 7 subunits arranged in a ring. Interacts with the chaperonin GroEL.

The protein localises to the cytoplasm. Functionally, together with the chaperonin GroEL, plays an essential role in assisting protein folding. The GroEL-GroES system forms a nano-cage that allows encapsulation of the non-native substrate proteins and provides a physical environment optimized to promote and accelerate protein folding. GroES binds to the apical surface of the GroEL ring, thereby capping the opening of the GroEL channel. This chain is Co-chaperonin GroES, found in Clostridium novyi (strain NT).